Reading from the N-terminus, the 824-residue chain is Leucine--tRNA ligase (824 aa).

A 'HIGH' region motif is present at residues 42–52; that stretch reads PYPSGRIHMGH. The 'KMSKS' region motif lies at 581–585; it reads KMSKS. An ATP-binding site is contributed by Lys584.

This sequence belongs to the class-I aminoacyl-tRNA synthetase family.

It localises to the cytoplasm. The enzyme catalyses tRNA(Leu) + L-leucine + ATP = L-leucyl-tRNA(Leu) + AMP + diphosphate. The chain is Leucine--tRNA ligase from Geotalea daltonii (strain DSM 22248 / JCM 15807 / FRC-32) (Geobacter daltonii).